The following is a 355-amino-acid chain: IGF-like family receptor 1 (355 aa).

Residues 1 to 22 form the signal peptide; it reads MGPGRCLLTALLLLALAPPPEA. At 23-163 the chain is on the extracellular side; it reads SQYCGRLEYW…PQQAWPNFLP (141 aa). Positions 120-147 are disordered; the sequence is KGHCPLTPGNPGAPSSQERSSPASSIAW. Over residues 132 to 144 the composition is skewed to low complexity; sequence APSSQERSSPASS. A helical transmembrane segment spans residues 164-184; that stretch reads LVVLVLLLTLAVIAILLFILL. The Cytoplasmic portion of the chain corresponds to 185–355; sequence WHLCWPKEKA…KLGSSGVCWA (171 aa).

Its subcellular location is the cell membrane. Probable cell membrane receptor for the IGF-like family proteins. Binds IGFL1 and IGFL3 with a higher affinity. May also bind IGFL2. The chain is IGF-like family receptor 1 (IGFLR1) from Homo sapiens (Human).